The following is a 70-amino-acid chain: Large ribosomal subunit protein eL38 (70 aa).

It belongs to the eukaryotic ribosomal protein eL38 family.

The chain is Large ribosomal subunit protein eL38 (RpL38) from Julodis onopordi (Jewel beetle).